Here is a 493-residue protein sequence, read N- to C-terminus: MFS-type transporter efuF (493 aa).

The next 11 membrane-spanning stretches (helical) occupy residues 90–110 (ITLV…NMLL), 117–137 (IMLP…CAVH), 147–167 (LLMG…LTTF), 179–199 (IFYG…YGVF), 211–231 (FLMI…YWHL), 279–299 (IALY…VGNF), 316–336 (LYTV…CTSS), 343–363 (STHL…LITL), 370–390 (GPTY…SCIF), 406–426 (AVTG…SLAF), and 435–455 (IPAL…VLGF).

This sequence belongs to the major facilitator superfamily.

The protein resides in the membrane. Its function is as follows. MFS-type transporter; part of the gene cluster that mediates the biosynthesis of enfumafungin, a glycosylated fernene-type triterpenoid with potent antifungal activity, mediated by its interaction with beta-1,3-glucan synthase and the fungal cell wall. Might facilitate the transport of glucose units to the subcellular site of enfumafungin biosynthesis. The sequence is that of MFS-type transporter efuF from Hormonema carpetanum.